Here is a 353-residue protein sequence, read N- to C-terminus: Dihydroorotate dehydrogenase (quinone) (353 aa).

Residues 67–71 (AGFDK) and Thr-91 contribute to the FMN site. Lys-71 contacts substrate. 116–120 (NRMGF) is a substrate binding site. Asn-144 and Asn-177 together coordinate FMN. Asn-177 contributes to the substrate binding site. Ser-180 serves as the catalytic Nucleophile. Substrate is bound at residue Asn-182. Residues Lys-213 and Thr-241 each contribute to the FMN site. A substrate-binding site is contributed by 242 to 243 (NT). FMN-binding positions include Gly-265, Gly-294, and 315–316 (YT).

Belongs to the dihydroorotate dehydrogenase family. Type 2 subfamily. Monomer. Requires FMN as cofactor.

It localises to the cell membrane. The catalysed reaction is (S)-dihydroorotate + a quinone = orotate + a quinol. It functions in the pathway pyrimidine metabolism; UMP biosynthesis via de novo pathway; orotate from (S)-dihydroorotate (quinone route): step 1/1. Its function is as follows. Catalyzes the conversion of dihydroorotate to orotate with quinone as electron acceptor. The polypeptide is Dihydroorotate dehydrogenase (quinone) (Mycobacteroides abscessus (strain ATCC 19977 / DSM 44196 / CCUG 20993 / CIP 104536 / JCM 13569 / NCTC 13031 / TMC 1543 / L948) (Mycobacterium abscessus)).